A 344-amino-acid polypeptide reads, in one-letter code: FCS-Like Zinc finger 10 (344 aa).

An FLZ-type zinc finger spans residues 270–314 (DFLSFCYGCSKKLGMGEDIYMYSGYKAFCSSECRSKEIDLDEEME). Over residues 309 to 320 (LDEEMEDGDEEE) the composition is skewed to acidic residues. The segment at 309–344 (LDEEMEDGDEEEAIKSVSSSDKESKKKSNGVFFTVG) is disordered.

The protein belongs to the FLZ family. As to quaternary structure, interacts with KIN10 and KIN11 via its FLZ-type zinc finger domain. Interacts with KINB1, KINB2 and KINB3 via its N-terminal part. Forms homodimer and heterodimer with FLZ2 and FLZ12 in vitro. In terms of tissue distribution, early expressed in hypocotyl and cotyledon and preferentially in the stelar region of the shoot and root. Later expressed in root-shoot junction, lateral root, old or senescing leaves and in pistil and pollen of flower buds or open flowers.

It is found in the cytoplasm. The protein localises to the nucleus. It localises to the endoplasmic reticulum. Functionally, may act as an adapter to facilitate the interaction of SnRK1 complex with effector proteins, conferring tissue- and stimulus-type specific differences in the SnRK1 regulation pathway. Negatively regulates KIN10 leading to a repression of the SnRK1 signaling pathway. In Arabidopsis thaliana (Mouse-ear cress), this protein is FCS-Like Zinc finger 10.